The chain runs to 366 residues: Lipase member J (366 aa).

The active-site Nucleophile is the Ser141. Residues Asp312 and His341 each act as charge relay system in the active site.

This sequence belongs to the AB hydrolase superfamily. Lipase family.

The protein is Lipase member J (LIPJ) of Homo sapiens (Human).